The sequence spans 221 residues: Glutathione S-transferase 1 (221 aa).

Residues 7–88 enclose the GST N-terminal domain; the sequence is QKMQLYSFSL…YLEEKFPENP (82 aa). Residues 17–22, valine 60, 72–73, glutamine 112, and 116–118 each bind glutathione; these read SSCAWR, DS, and NLA. Positions 93–221 constitute a GST C-terminal domain; it reads DLQKRALNYQ…ISPMLDEAKS (129 aa).

The protein belongs to the GST superfamily. Zeta family.

It catalyses the reaction RX + glutathione = an S-substituted glutathione + a halide anion + H(+). In terms of biological role, conjugation of reduced glutathione to a wide number of exogenous and endogenous hydrophobic electrophiles. The protein is Glutathione S-transferase 1 (GST1) of Dianthus caryophyllus (Carnation).